The primary structure comprises 562 residues: Isochorismate synthase 2, chloroplastic (562 aa).

The N-terminal 55 residues, 1–55, are a transit peptide targeting the chloroplast; the sequence is MASLQCSFHFLGTNPKKYNPSSIFQSYSRTSFTKLSSRVSRQRFLRCTLSMNGCE.

The protein belongs to the isochorismate synthase family. The cofactor is Mg(2+).

The protein localises to the plastid. The protein resides in the chloroplast. It catalyses the reaction chorismate = isochorismate. Its pathway is siderophore biosynthesis; salicylate biosynthesis. In terms of biological role, isochorismate synthase involved in the synthesis of salicylic acid (SA) required for both local and systemic acquired resistance (LAR and SAR) while SA synthesized through the phenylalanine ammonium lyase (PAL) pathway seems to potentiate plant cell death. Also involved in phylloquinone (vitamin K1) synthesis. Has no isochorismate pyruvate lyase (IPL) activity. The sequence is that of Isochorismate synthase 2, chloroplastic (ICS2) from Arabidopsis thaliana (Mouse-ear cress).